The following is a 179-amino-acid chain: Large ribosomal subunit protein uL5 (179 aa).

This sequence belongs to the universal ribosomal protein uL5 family. As to quaternary structure, part of the 50S ribosomal subunit; part of the 5S rRNA/L5/L18/L25 subcomplex. Contacts the 5S rRNA and the P site tRNA. Forms a bridge to the 30S subunit in the 70S ribosome.

In terms of biological role, this is one of the proteins that bind and probably mediate the attachment of the 5S RNA into the large ribosomal subunit, where it forms part of the central protuberance. In the 70S ribosome it contacts protein S13 of the 30S subunit (bridge B1b), connecting the 2 subunits; this bridge is implicated in subunit movement. Contacts the P site tRNA; the 5S rRNA and some of its associated proteins might help stabilize positioning of ribosome-bound tRNAs. The polypeptide is Large ribosomal subunit protein uL5 (Maridesulfovibrio salexigens (strain ATCC 14822 / DSM 2638 / NCIMB 8403 / VKM B-1763) (Desulfovibrio salexigens)).